Here is a 288-residue protein sequence, read N- to C-terminus: Small ribosomal subunit protein uS2 (288 aa).

The interval 228 to 288 is disordered; sequence RAGLSSDKDA…PAAEAPSTEA (61 aa). Over residues 257 to 288 the composition is skewed to low complexity; that stretch reads QAAPAAEAAPAAEAQAAPAAEAPAAEAPSTEA.

This sequence belongs to the universal ribosomal protein uS2 family.

The sequence is that of Small ribosomal subunit protein uS2 from Rhodococcus opacus (strain B4).